A 364-amino-acid chain; its full sequence is Chorismate synthase (364 aa).

The NADP(+) site is built by R48 and R54. Residues 125–127 (RSS), 238–239 (NA), G278, 293–297 (KPTSS), and R319 each bind FMN.

This sequence belongs to the chorismate synthase family. As to quaternary structure, homotetramer. FMNH2 serves as cofactor.

It catalyses the reaction 5-O-(1-carboxyvinyl)-3-phosphoshikimate = chorismate + phosphate. The protein operates within metabolic intermediate biosynthesis; chorismate biosynthesis; chorismate from D-erythrose 4-phosphate and phosphoenolpyruvate: step 7/7. Functionally, catalyzes the anti-1,4-elimination of the C-3 phosphate and the C-6 proR hydrogen from 5-enolpyruvylshikimate-3-phosphate (EPSP) to yield chorismate, which is the branch point compound that serves as the starting substrate for the three terminal pathways of aromatic amino acid biosynthesis. This reaction introduces a second double bond into the aromatic ring system. The protein is Chorismate synthase of Shewanella woodyi (strain ATCC 51908 / MS32).